Reading from the N-terminus, the 431-residue chain is RbAp48-related WD40 repeat-containing protein prw1 (431 aa).

6 WD repeats span residues 127–159 (SHPE…LVFD), 182–213 (KHTQ…SCWD), 232–263 (SHEK…HVHD), 279–310 (AHSG…ALWD), 323–354 (GHED…LVWD), and 380–411 (GHTS…QIWT).

This sequence belongs to the WD repeat HIR1 family. As to quaternary structure, heterotetramer of alp13, clr6, prw1 and pst2.

The protein resides in the nucleus. Has a role in chromatin assembly and chromosome segregation. Involved in the deacetylation of histones. The chain is RbAp48-related WD40 repeat-containing protein prw1 (prw1) from Schizosaccharomyces pombe (strain 972 / ATCC 24843) (Fission yeast).